The sequence spans 244 residues: Methylthioribulose-1-phosphate dehydratase (244 aa).

C104 contributes to the substrate binding site. 2 residues coordinate Zn(2+): H122 and H124. Catalysis depends on E148, which acts as the Proton donor/acceptor. H204 contributes to the Zn(2+) binding site.

Belongs to the aldolase class II family. MtnB subfamily. Zn(2+) serves as cofactor.

The protein localises to the cytoplasm. It carries out the reaction 5-(methylsulfanyl)-D-ribulose 1-phosphate = 5-methylsulfanyl-2,3-dioxopentyl phosphate + H2O. It functions in the pathway amino-acid biosynthesis; L-methionine biosynthesis via salvage pathway; L-methionine from S-methyl-5-thio-alpha-D-ribose 1-phosphate: step 2/6. Functionally, catalyzes the dehydration of methylthioribulose-1-phosphate (MTRu-1-P) into 2,3-diketo-5-methylthiopentyl-1-phosphate (DK-MTP-1-P). The polypeptide is Methylthioribulose-1-phosphate dehydratase (Cryptococcus neoformans var. neoformans serotype D (strain B-3501A) (Filobasidiella neoformans)).